Reading from the N-terminus, the 568-residue chain is Polyprotein P2A (568 aa).

The next 2 membrane-spanning stretches (helical) occupy residues 10–30 (KSVMLMSRMSWSKLALLISVA) and 41–61 (TLICMGILVSVVLNWIVCAVC). Positions 129 to 326 (VENSRLQPLE…TVENSELYPD (198 aa)) constitute a Peptidase S39 domain. Catalysis depends on for protease activity residues His-176, Asp-209, and Ser-276. Phosphothreonine; by host is present on Thr-339. At Ser-390 the chain carries Phosphoserine; by host. Disordered stretches follow at residues 403-435 (LNYQRAGSLRGSPPLANLSSTRATSGVTKESSI) and 469-568 (SSQN…ATSK). 2 stretches are compositionally biased toward polar residues: residues 419-435 (NLSSTRATSGVTKESSI) and 469-478 (SSQNSKSSLG). Residues 481–502 (ADRKQKSDRSSSKPEGLKESKR) show a composition bias toward basic and acidic residues. Residues 507-516 (NWQSLTSKPS) are compositionally biased toward polar residues. Residues 539–549 (KSKRSRTRGKS) are compositionally biased toward basic residues. The segment covering 554-568 (VPASPSPKSGSATSK) has biased composition (polar residues).

The protein localises to the host membrane. Responsible for cleavages of polyprotein P2A and replicase polyprotein P2AB. Functionally, covalently attached to the 5' extremity of the genomic and subgenomic RNAs. It may serve as a primer for the replicase. This is Polyprotein P2A from Cocksfoot mottle virus (isolate Dactylis glomerata/Norway/CfMV-NO/1995) (CfMV).